Here is a 116-residue protein sequence, read N- to C-terminus: uncharacterized protein (116 aa).

This is an uncharacterized protein from Saccharomyces cerevisiae (strain ATCC 204508 / S288c) (Baker's yeast).